The primary structure comprises 114 residues: MLNIYLKSKIHMATVTGKKLFYEGSIEIDEELMERAGISEGEMVLVVNVNNAERFVTYVIKGKRGSREINLNGAAARLAEEGDRVIIMAFTLSETPVKSKTIILNDKNEIVQEK.

Ser25 acts as the Schiff-base intermediate with substrate; via pyruvic acid in catalysis. Pyruvic acid (Ser) is present on Ser25. Position 57 (Thr57) interacts with substrate. Tyr58 (proton donor) is an active-site residue. 73–75 (GAA) contacts substrate.

This sequence belongs to the PanD family. As to quaternary structure, heterooctamer of four alpha and four beta subunits. The cofactor is pyruvate. Is synthesized initially as an inactive proenzyme, which is activated by self-cleavage at a specific serine bond to produce a beta-subunit with a hydroxyl group at its C-terminus and an alpha-subunit with a pyruvoyl group at its N-terminus.

The protein localises to the cytoplasm. It catalyses the reaction L-aspartate + H(+) = beta-alanine + CO2. It functions in the pathway cofactor biosynthesis; (R)-pantothenate biosynthesis; beta-alanine from L-aspartate: step 1/1. Catalyzes the pyruvoyl-dependent decarboxylation of aspartate to produce beta-alanine. The chain is Aspartate 1-decarboxylase from Thermotoga sp. (strain RQ2).